A 569-amino-acid polypeptide reads, in one-letter code: MDEEIKHEIRKMALQNAFEHGGQTQDKIILGKILGTKPEFRTKVKEISGEISEIVASVNQLSPEEQQKEMEEKFPEALAPKEKIEEREGLPELKDAIQGKVVTRFPPEPNGYPHIGHAKAAIINSEYAKMYGGKFILRMDDTNPEAERMEYHAAIKVGLEWLGIEFDQVKSTSDDMEVFYEKGIELINSGKAYVCTCKREDISQNRRERKACKCSMEDVGKNNKNWEKMQNKFKPGEAIVRFRGDMKADNAVMRDPVLLRIIDEKHYTVGDKYRIWPSYDFAVAIEDSIDGVTHAFRSKEFELRKELIDAILDALGMRKPQQGFFSRLEFKGMPISKRIIKPLIEEGKVSWYDDPRLPTLEALRRRGIKPEAIRKFIMSLGLTKANTLAPFDALEAFNRKFVDADSMRLFMVKNAKKLKIKNLQSTIVEVPNHPINDLGKRKIEITEDFYISGDDSEAIKEQSTIRLLGLGNVKITKIGNELEGEFERDGDSSNILKIQWVPQKTAHEIKMIIPKILFNDEEFNEDSLEELDVYTEPQYLQLKEGEEIQFVRFGYCRKDSQNQAIFTHK.

Positions 107-117 match the 'HIGH' region motif; that stretch reads PEPNGYPHIGH.

The protein belongs to the class-I aminoacyl-tRNA synthetase family. Glutamate--tRNA ligase type 2 subfamily.

The protein resides in the cytoplasm. The catalysed reaction is tRNA(Glu) + L-glutamate + ATP = L-glutamyl-tRNA(Glu) + AMP + diphosphate. Functionally, catalyzes the attachment of glutamate to tRNA(Glu) in a two-step reaction: glutamate is first activated by ATP to form Glu-AMP and then transferred to the acceptor end of tRNA(Glu). The sequence is that of Glutamate--tRNA ligase from Nitrosopumilus maritimus (strain SCM1).